Consider the following 709-residue polypeptide: Probable serine/threonine-protein kinase zyg-1 (709 aa).

The 239-residue stretch at Phe13–Val251 folds into the Protein kinase domain. Residues Ile19 to Val27 and Lys41 contribute to the ATP site. Asp130 (proton acceptor) is an active-site residue. Disordered regions lie at residues Lys254–Arg329 and Ser591–Thr633. Composition is skewed to basic and acidic residues over residues Ser262 to Pro291 and Ser302 to His313. Polar residues predominate over residues Pro607–Asn627.

Belongs to the protein kinase superfamily. Ser/Thr protein kinase family.

It is found in the cytoplasm. Its subcellular location is the cytoskeleton. The protein localises to the microtubule organizing center. The protein resides in the centrosome. It localises to the centriole. The catalysed reaction is L-seryl-[protein] + ATP = O-phospho-L-seryl-[protein] + ADP + H(+). It carries out the reaction L-threonyl-[protein] + ATP = O-phospho-L-threonyl-[protein] + ADP + H(+). Protein kinase that plays a central role in centrosome duplication. Paternal copy is required to regulate synthesis of daughter centrioles prior to fertilization. Maternal copy regulates centrosome duplication during later cell cycles. Functions upstream of sas-5 and sas-6, and is required for their localization to the centrosome. In Caenorhabditis briggsae, this protein is Probable serine/threonine-protein kinase zyg-1 (zyg-1).